A 239-amino-acid chain; its full sequence is Probable transcriptional regulatory protein YeeI (239 aa).

It belongs to the TACO1 family. YeeN subfamily.

The protein localises to the cytoplasm. This chain is Probable transcriptional regulatory protein YeeI (yeeI), found in Bacillus subtilis (strain 168).